Here is a 523-residue protein sequence, read N- to C-terminus: Bifunctional purine biosynthesis protein PurH (523 aa).

An MGS-like domain is found at 1–154; sequence MTATAGSNKR…KNHPSVAVVT (154 aa).

Belongs to the PurH family.

It carries out the reaction (6R)-10-formyltetrahydrofolate + 5-amino-1-(5-phospho-beta-D-ribosyl)imidazole-4-carboxamide = 5-formamido-1-(5-phospho-D-ribosyl)imidazole-4-carboxamide + (6S)-5,6,7,8-tetrahydrofolate. It catalyses the reaction IMP + H2O = 5-formamido-1-(5-phospho-D-ribosyl)imidazole-4-carboxamide. It participates in purine metabolism; IMP biosynthesis via de novo pathway; 5-formamido-1-(5-phospho-D-ribosyl)imidazole-4-carboxamide from 5-amino-1-(5-phospho-D-ribosyl)imidazole-4-carboxamide (10-formyl THF route): step 1/1. Its pathway is purine metabolism; IMP biosynthesis via de novo pathway; IMP from 5-formamido-1-(5-phospho-D-ribosyl)imidazole-4-carboxamide: step 1/1. The sequence is that of Bifunctional purine biosynthesis protein PurH from Streptomyces coelicolor (strain ATCC BAA-471 / A3(2) / M145).